A 314-amino-acid polypeptide reads, in one-letter code: Malate dehydrogenase (314 aa).

NAD(+)-binding positions include 13–18 and D37; that span reads GGGQIG. R88 and R94 together coordinate substrate. Residues N101 and 124-126 each bind NAD(+); that span reads VAN. N126 and R157 together coordinate substrate. Catalysis depends on H181, which acts as the Proton acceptor.

Belongs to the LDH/MDH superfamily. MDH type 3 family.

It carries out the reaction (S)-malate + NAD(+) = oxaloacetate + NADH + H(+). Functionally, catalyzes the reversible oxidation of malate to oxaloacetate. This is Malate dehydrogenase from Myxococcus xanthus.